A 361-amino-acid chain; its full sequence is ATP phosphoribosyltransferase regulatory subunit (361 aa).

The protein belongs to the class-II aminoacyl-tRNA synthetase family. HisZ subfamily. Heteromultimer composed of HisG and HisZ subunits.

It is found in the cytoplasm. It participates in amino-acid biosynthesis; L-histidine biosynthesis; L-histidine from 5-phospho-alpha-D-ribose 1-diphosphate: step 1/9. Required for the first step of histidine biosynthesis. May allow the feedback regulation of ATP phosphoribosyltransferase activity by histidine. In Thermus thermophilus (strain ATCC 27634 / DSM 579 / HB8), this protein is ATP phosphoribosyltransferase regulatory subunit.